A 299-amino-acid chain; its full sequence is Ribosomal RNA small subunit methyltransferase H (299 aa).

Residues 36-38 (GGH), aspartate 55, aspartate 103, and glutamine 110 contribute to the S-adenosyl-L-methionine site. Basic and acidic residues-rich tracts occupy residues 268-282 (KPVR…ENPR) and 289-299 (RAAERIEKGGD). A disordered region spans residues 268–299 (KPVRPSEEEIRENPRARSGRLRAAERIEKGGD).

Belongs to the methyltransferase superfamily. RsmH family.

The protein resides in the cytoplasm. It catalyses the reaction cytidine(1402) in 16S rRNA + S-adenosyl-L-methionine = N(4)-methylcytidine(1402) in 16S rRNA + S-adenosyl-L-homocysteine + H(+). In terms of biological role, specifically methylates the N4 position of cytidine in position 1402 (C1402) of 16S rRNA. The protein is Ribosomal RNA small subunit methyltransferase H of Thermotoga sp. (strain RQ2).